The sequence spans 97 residues: Large ribosomal subunit protein eL21 (97 aa).

A disordered region spans residues 1–23; the sequence is MTKMSKGPRSGSRRVMTKSVKNK.

This sequence belongs to the eukaryotic ribosomal protein eL21 family.

This is Large ribosomal subunit protein eL21 from Picrophilus torridus (strain ATCC 700027 / DSM 9790 / JCM 10055 / NBRC 100828 / KAW 2/3).